The following is a 490-amino-acid chain: Aspartyl/glutamyl-tRNA(Asn/Gln) amidotransferase subunit B (490 aa).

Belongs to the GatB/GatE family. GatB subfamily. As to quaternary structure, heterotrimer of A, B and C subunits.

The catalysed reaction is L-glutamyl-tRNA(Gln) + L-glutamine + ATP + H2O = L-glutaminyl-tRNA(Gln) + L-glutamate + ADP + phosphate + H(+). The enzyme catalyses L-aspartyl-tRNA(Asn) + L-glutamine + ATP + H2O = L-asparaginyl-tRNA(Asn) + L-glutamate + ADP + phosphate + 2 H(+). Allows the formation of correctly charged Asn-tRNA(Asn) or Gln-tRNA(Gln) through the transamidation of misacylated Asp-tRNA(Asn) or Glu-tRNA(Gln) in organisms which lack either or both of asparaginyl-tRNA or glutaminyl-tRNA synthetases. The reaction takes place in the presence of glutamine and ATP through an activated phospho-Asp-tRNA(Asn) or phospho-Glu-tRNA(Gln). This Burkholderia pseudomallei (strain K96243) protein is Aspartyl/glutamyl-tRNA(Asn/Gln) amidotransferase subunit B.